A 433-amino-acid chain; its full sequence is MAQFYSAKRRTTTRQIITVSVNDLDSFGQGVARHNGKTLFIPGLLPQENAEVTVTEDKKQYARAKVVRRLSDSPERETPRCPHFGVCGGCQQQHASVDLQQRSKSAALARLMKHEVSEVIADVPWGYRRRARLSLNYLPKTQQLQMGFRKAGSSDIVDVKQCPILVPQLEALLPKVRACLGSLQAMRHLGHVELVQATSGTLMILRHTAPLSSADREKLERFSHSEGLDLYLAPDSEILETVSGEMPWYDSNGLRLTFSPRDFIQVNAGVNQKMVARALEWLEVEPEDRVLDLFCGMGNFTLPLATQAASVVGVEGVPALVEKGQQNARLNCLQNVTFYHENLEEDVTKQPWAKNGFDKVLLDPARAGAAGVMQQIIKLEPIRIVYVSCNPATLARDSEALLKAGYTIARLAMLDMFPHTGHLESMVLFSRVK.

Positions 10-68 (RTTTRQIITVSVNDLDSFGQGVARHNGKTLFIPGLLPQENAEVTVTEDKKQYARAKVVR) constitute a TRAM domain. [4Fe-4S] cluster is bound by residues C81, C87, C90, and C162. Residues Q265, F294, N299, E315, N342, and D363 each contribute to the S-adenosyl-L-methionine site. The Nucleophile role is filled by C389.

It belongs to the class I-like SAM-binding methyltransferase superfamily. RNA M5U methyltransferase family. RlmD subfamily.

It catalyses the reaction uridine(1939) in 23S rRNA + S-adenosyl-L-methionine = 5-methyluridine(1939) in 23S rRNA + S-adenosyl-L-homocysteine + H(+). In terms of biological role, catalyzes the formation of 5-methyl-uridine at position 1939 (m5U1939) in 23S rRNA. This Escherichia coli O157:H7 protein is 23S rRNA (uracil(1939)-C(5))-methyltransferase RlmD.